The chain runs to 450 residues: Neuronal acetylcholine receptor subunit alpha-10 (450 aa).

The N-terminal stretch at 1–24 (MGLRSHHLSLGLLLLFLLPAECLG) is a signal peptide. Residues 25–237 (AEGRLALKLF…FTLLLRRRAA (213 aa)) are Extracellular-facing. 2 N-linked (GlcNAc...) asparagine glycosylation sites follow: Asn40 and Asn56. 2 cysteine pairs are disulfide-bonded: Cys154-Cys168 and Cys218-Cys219. 3 helical membrane passes run 238–258 (AYVC…PLAF), 268–288 (VSLG…LAES), and 302–322 (YMAT…IMNL). Over 323-428 (HYCGPSVRPV…WKRLARVMDR (106 aa)) the chain is Cytoplasmic. The interval 355-380 (EPCGQSRPPELSPSPQSPEGGAGPPA) is disordered. The chain crosses the membrane as a helical span at residues 429-449 (FFLAIFFSMALVMSLLVLVQA).

This sequence belongs to the ligand-gated ion channel (TC 1.A.9) family. Acetylcholine receptor (TC 1.A.9.1) subfamily. Alpha-10/CHRNA10 sub-subfamily. As to quaternary structure, forms homo- or heterooligomeric channels in conjunction with CHRNA10. The native outer hair cell receptor may be composed of CHRNA9:CHRNA10 heterooligomers. Found in the stoichiometric form (CHRNA9)2:(CHRNA10)3. Expressed in inner-ear tissue, tonsil, immortalized B-cells, cultured T-cells and peripheral blood lymphocytes.

The protein resides in the synaptic cell membrane. Its subcellular location is the cell membrane. It carries out the reaction Ca(2+)(in) = Ca(2+)(out). The enzyme catalyses K(+)(in) = K(+)(out). It catalyses the reaction Na(+)(in) = Na(+)(out). The catalysed reaction is Mg(2+)(in) = Mg(2+)(out). Its activity is regulated as follows. Activated by a myriad of ligands such as acetylcholine. AChR activity is inhibited by the antagonists alpha-conotoxins RgIA and GeXXA, small disulfide-constrained peptides from cone snails. Functionally, component of neuronal acetylcholine receptors (nAChRs) that function as pentameric, ligand-gated cation channels with high calcium permeability. nAChRs are excitatory neurotrasnmitter receptors formed by a collection of nAChR subunits. Each nAchR subunit confers differential attributes to channel properties, including activation, deactivation and desensitization kinetics, pH sensitivity, cation permeability, and binding to allosteric modulators. Forms heteropentamers with CHRNA9. Expressed in the inner ear, in sympathetic neurons and in other non-neuronal cells, such as skin keratinocytes and lymphocytes. nAChR formed by CHRNA9:CHRNA10 is involved in modulation of auditory stimuli. The channel is permeable to a range of divalent cations including calcium, the influx of which may activate a potassium current which hyperpolarizes the cell membrane. In the ear, mediates synaptic transmission between efferent olivocochlear fibers and hair cells of the cochlea, this may lead to a reduction in basilar membrane motion, altering the activity of auditory nerve fibers and reducing the range of dynamic hearing. This may protect against acoustic trauma. May also regulate keratinocyte adhesion. The sequence is that of Neuronal acetylcholine receptor subunit alpha-10 from Homo sapiens (Human).